The sequence spans 180 residues: Negative modulator of initiation of replication (180 aa).

Residues 115–119 form an interaction with DNA region; that stretch reads RTRVY.

Belongs to the SeqA family. In terms of assembly, homodimer. Polymerizes to form helical filaments.

It is found in the cytoplasm. Its function is as follows. Negative regulator of replication initiation, which contributes to regulation of DNA replication and ensures that replication initiation occurs exactly once per chromosome per cell cycle. Binds to pairs of hemimethylated GATC sequences in the oriC region, thus preventing assembly of replication proteins and re-initiation at newly replicated origins. Repression is relieved when the region becomes fully methylated. The polypeptide is Negative modulator of initiation of replication (Aliivibrio fischeri (strain ATCC 700601 / ES114) (Vibrio fischeri)).